The sequence spans 199 residues: Probable cobalt-precorrin-6B C(15)-methyltransferase (decarboxylating) (199 aa).

S-adenosyl-L-methionine contacts are provided by residues threonine 24, 48-52 (GCGTG), aspartate 72, and alanine 101.

Belongs to the methyltransferase superfamily. Archaeal-type CbiT family.

The catalysed reaction is Co-precorrin-6B + S-adenosyl-L-methionine = Co-precorrin-7 + S-adenosyl-L-homocysteine + CO2. Its pathway is cofactor biosynthesis; adenosylcobalamin biosynthesis; cob(II)yrinate a,c-diamide from sirohydrochlorin (anaerobic route): step 8/10. Catalyzes the methylation of C-15 in cobalt-precorrin-6B followed by the decarboxylation of C-12 to form cobalt-precorrin-7. The chain is Probable cobalt-precorrin-6B C(15)-methyltransferase (decarboxylating) from Saccharolobus islandicus (strain L.S.2.15 / Lassen #1) (Sulfolobus islandicus).